We begin with the raw amino-acid sequence, 177 residues long: Parathyroid hormone-related protein (177 aa).

An N-terminal signal peptide occupies residues 1-24 (MQRRLVQQWSVAVFLLSYAVPSCG). The propeptide occupies 25–34 (RSVEGLSRRL). Positions 57 to 68 (RFFLHHLIAEIH) are important for receptor binding. Residues 74 to 177 (ATSEVSPNSK…TSLELDSRRH (104 aa)) are disordered. Residues 76 to 90 (SEVSPNSKPSPNTKN) are compositionally biased toward polar residues. The Nuclear localization signal motif lies at 108-129 (TNKVETYKEQPLKTPGKKKKGK). Basic and acidic residues predominate over residues 109 to 118 (NKVETYKEQP). Positions 122 to 132 (PGKKKKGKPGK) are enriched in basic residues.

Belongs to the parathyroid hormone family. Interacts with PTH1R (via N-terminal extracellular domain). In terms of processing, there are 3 principal secretory forms, called PTHrP[1-36], PTHrP[38-94], and osteostatin (PTHrP[107-139]) arising from endoproteolytic cleavage of the initial translation product. Each of these secretory forms is believed to have one or more of its own receptors that mediates the normal paracrine, autocrine and endocrine actions. In terms of tissue distribution, ubiquitous. Also expressed in the mammary gland.

It localises to the secreted. The protein resides in the cytoplasm. Its subcellular location is the nucleus. Its function is as follows. Neuroendocrine peptide which is a critical regulator of cellular and organ growth, development, migration, differentiation and survival and of epithelial calcium ion transport. Acts by binding to its receptor, PTH1R, activating G protein-coupled receptor signaling. Regulates endochondral bone development and epithelial-mesenchymal interactions during the formation of the mammary glands and teeth. Required for skeletal homeostasis. Promotes mammary mesenchyme differentiation and bud outgrowth by modulating mesenchymal cell responsiveness to BMPs. Up-regulates BMPR1A expression in the mammary mesenchyme and this increases the sensitivity of these cells to BMPs and allows them to respond to BMP4 in a paracrine and/or autocrine fashion. BMP4 signaling in the mesenchyme, in turn, triggers epithelial outgrowth and augments MSX2 expression, which causes the mammary mesenchyme to inhibit hair follicle formation within the nipple sheath. Promotes colon cancer cell migration and invasion in an integrin alpha-6/beta-1-dependent manner through activation of Rac1. Potent inhibitor of osteoclastic bone resorption. The sequence is that of Parathyroid hormone-related protein from Homo sapiens (Human).